The sequence spans 143 residues: Small ribosomal subunit protein uS11c (143 aa).

It belongs to the universal ribosomal protein uS11 family. In terms of assembly, part of the 30S ribosomal subunit.

The protein localises to the plastid. Its subcellular location is the chloroplast. This Brachypodium distachyon (Purple false brome) protein is Small ribosomal subunit protein uS11c.